Consider the following 4568-residue polypeptide: Dynein beta chain, flagellar outer arm (4568 aa).

A stem region spans residues Met1–Ala1880. Coiled-coil stretches lie at residues Phe277–Asp293, Glu1158–Leu1175, Lys1372–Asp1400, Glu1614–Phe1650, and Gln1778–Leu1825. Residues Gly1144–Ala1166 are disordered. Positions Glu1150–Ala1166 are enriched in basic and acidic residues. AAA stretches follow at residues Tyr1881–Val2102, Glu2164–Lys2385, Gln2493–Gly2738, and Glu2841–Tyr3090. Residues Gly1919–Thr1926, Gly2202–Thr2209, and Gly2530–Ser2537 contribute to the ATP site. Residues Leu2831–Val2848 are a coiled coil. Gly2879 to Gln2886 is a binding site for ATP. 3 coiled-coil regions span residues Lys3106–Ile3162, Lys3339–Ser3425, and His3648–Glu3728. Residues Lys3106–Ser3425 form a stalk region. 2 AAA regions span residues Leu3481–Glu3711 and Met3937–Asn4172.

This sequence belongs to the dynein heavy chain family. In terms of assembly, consists of at least 3 heavy chains (alpha, beta and gamma), 2 intermediate chains and 8 light chains.

It is found in the cell projection. The protein localises to the cilium. Its subcellular location is the flagellum. It localises to the cytoplasm. The protein resides in the cytoskeleton. It is found in the flagellum axoneme. In terms of biological role, force generating protein of eukaryotic cilia and flagella. Produces force towards the minus ends of microtubules. Dynein has ATPase activity; the force-producing power stroke is thought to occur on release of ADP. The chain is Dynein beta chain, flagellar outer arm (ODA4) from Chlamydomonas reinhardtii (Chlamydomonas smithii).